Reading from the N-terminus, the 970-residue chain is MSKGFTFEKNLPHQKAGVDAVMNVFVSATSHQEDNVSIRLLVNPELRLTEQQYYKNIKKVQELNGIEHVKNNYDARSNVIDVSMETGTGKTYTYTKTIFDLNKSFGINKFIIIVPTLSIKAGTVNFLKSDALKEHFRDDYEREIKTYVVESQKNAGKSTKSYMPQAIHDFVEASNFNKKYIHVLVINTGMIHSKNLNSTYDVGLLDNHFDSPFSALGAVKPFIIIDEPHKFPTGKKTWENIEKFNAQYIIRYGATFSEGYKNLVYRLTAVDAFNEDLVKGIDAYIEDIVGDGDANLKFIKSDGEEVTFELNENNKKTLFKLTKGESLSKTHSAIHDLTLDALGKNTVVLSNGIELKIGCSINPYSYDQTLADSMMRKAIKEHFKLEKEFLTQRPRIKPLTLFFIDDIEGYRDGNNIAGSLKAKFEEYVLAEANELLKIEKDEFYSNYLEKTVKDISSVHGGYFSKDNSDKDDKIEKEINEILHDKELLLSLDNPRRFIFSKWTLREGWDNPNVFQICKLRSSGSTTSKLQEVGRGLRLPVNEYMCRVKDRNFTLKYYVDFTEKDFVDSLVKEVNESSFKERVPSKFTQELKEQIRAQYPELSSRALMNELFNDEIIDDNDNFKDSDAYSRLKSKYPAAFPIGVKPGKIKKATDGKRRTKMRVGKFSELKELWELINQKAVIEYKINSENEFLSIFKSFMLEETERFTKSGVHTRIDKIYIHNDMAMSKSIVSDDDDFAKLNTMSYREFLDNLSQTIFVKHDTLHKVFCDIKDTINITEYLNIQTIRKIKSGFSKYLLNNSFNKFSLGYNLISGSIHPTKFTNADGKPLDEVLSSDLGVLQDNSKAPLDTYLFEEVFYDSELERRNITDREIQSVVVFSKIPKNSIKIPVAGGYTYSPDFAYVVKTAEGDYLNFIIETKNVDSKDSLRLEEKKKIEHAQALFNQISQSVKVEFKTQFANDDIYQLIKSALP.

Residues 75–540 (ARSNVIDVSM…EVGRGLRLPV (466 aa)) are helicase-like domain. The endonuclease domain stretch occupies residues 894–918 (TYSPDFAYVVKTAEGDYLNFIIETK).

Belongs to the type III restriction-modification system Res protein family. A heterotetramer with stoichiometry Res(2)Mod(2). It depends on Mg(2+) as a cofactor. Requires S-adenosyl-L-methionine as cofactor.

The enzyme catalyses Endonucleolytic cleavage of DNA to give specific double-stranded fragments with terminal 5'-phosphates.. Its function is as follows. A type III restriction enzyme that recognizes 2 inversely oriented double-stranded sequences 5'-AGACC-3' and cleaves DNA 25-27 base pairs downstream of one site, producing a single-strand 5' protrusion of two nucleotides. DNA restriction requires both the Res and Mod subunits. DNA topology affects its action; relaxed and negatively supercoiled DNA are digested but positively supercoiled DNA is not a good substrate. After binding to one recognition site undergoes random one-dimensional diffusion along DNA until it collides with a stationary enzyme bound to the second DNA site, which is when DNA cleavage occurs. The sequence is that of Type III restriction-modification enzyme EcoPI Res subunit from Enterobacteriaceae (Bacteriophage P1).